Reading from the N-terminus, the 197-residue chain is Recombination protein RecR (197 aa).

The segment at 57–72 (CSVCFGITEDDPCRFC) adopts a C4-type zinc-finger fold. Positions 79–174 (GAICVVEEPQ…RVTRLAHGIP (96 aa)) constitute a Toprim domain.

It belongs to the RecR family.

Its function is as follows. May play a role in DNA repair. It seems to be involved in an RecBC-independent recombinational process of DNA repair. It may act with RecF and RecO. The protein is Recombination protein RecR of Geobacter sulfurreducens (strain ATCC 51573 / DSM 12127 / PCA).